The sequence spans 129 residues: MRITQGCFSFLPDLTDEQISAQVDYCLGRGWAVSLEHTDDPHPRNTYWEMWGMPMFDLRDPKGVMIELDECRKAWPGRYIRINAFDSTRGFETVTMSFIVNRPEVEPSLRMERTEVDGRSIRYTHSIVR.

The protein belongs to the RuBisCO small chain family. In terms of assembly, heterohexadecamer of 8 large and 8 small subunits.

RuBisCO catalyzes two reactions: the carboxylation of D-ribulose 1,5-bisphosphate, the primary event in carbon dioxide fixation, as well as the oxidative fragmentation of the pentose substrate. Both reactions occur simultaneously and in competition at the same active site. Although the small subunit is not catalytic it is essential for maximal activity. In Cereibacter sphaeroides (Rhodobacter sphaeroides), this protein is Ribulose bisphosphate carboxylase small subunit.